Reading from the N-terminus, the 199-residue chain is Guanylate kinase (199 aa).

The region spanning 19 to 198 is the Guanylate kinase-like domain; it reads VTVAVVSGPT…AVAHLVELLS (180 aa). Residue 26-33 participates in ATP binding; it reads GPTAVGKG.

It belongs to the guanylate kinase family.

It is found in the cytoplasm. The enzyme catalyses GMP + ATP = GDP + ADP. Functionally, essential for recycling GMP and indirectly, cGMP. The protein is Guanylate kinase of Cutibacterium acnes (strain DSM 16379 / KPA171202) (Propionibacterium acnes).